A 443-amino-acid chain; its full sequence is Tol-Pal system protein TolB (443 aa).

An N-terminal signal peptide occupies residues 1–33 (MKIGIINTKIRTVFSAFACMIAASLVCTMPARA).

The protein belongs to the TolB family. As to quaternary structure, the Tol-Pal system is composed of five core proteins: the inner membrane proteins TolA, TolQ and TolR, the periplasmic protein TolB and the outer membrane protein Pal. They form a network linking the inner and outer membranes and the peptidoglycan layer.

It localises to the periplasm. Part of the Tol-Pal system, which plays a role in outer membrane invagination during cell division and is important for maintaining outer membrane integrity. This chain is Tol-Pal system protein TolB, found in Brucella melitensis biotype 1 (strain ATCC 23456 / CCUG 17765 / NCTC 10094 / 16M).